The chain runs to 504 residues: Maturase K (504 aa).

Belongs to the intron maturase 2 family. MatK subfamily.

It localises to the plastid. It is found in the chloroplast. Functionally, usually encoded in the trnK tRNA gene intron. Probably assists in splicing its own and other chloroplast group II introns. In Quercus cerris (Turkey oak), this protein is Maturase K.